The sequence spans 747 residues: Mitochondrial inner membrane i-AAA protease supercomplex subunit YME1 (747 aa).

Positions 51-64 (KNSGEMPPKKEADS) are enriched in basic and acidic residues. A disordered region spans residues 51 to 92 (KNSGEMPPKKEADSSGKASNKSTISSIDNSQPPPPSNTNDKT). A compositionally biased stretch (polar residues) spans 66–80 (GKASNKSTISSIDNS). Residue 321-328 (GPPGTGKT) participates in ATP binding. Residue histidine 540 coordinates Zn(2+). Glutamate 541 is a catalytic residue. Histidine 544 and aspartate 618 together coordinate Zn(2+). The disordered stretch occupies residues 718–747 (STNTVVEGPDSDERKDIGDDKPKIPTMLNA). Positions 728–740 (SDERKDIGDDKPK) are enriched in basic and acidic residues.

The protein in the N-terminal section; belongs to the AAA ATPase family. It in the C-terminal section; belongs to the peptidase M41 family. As to quaternary structure, component of the mitochondrial inner membrane i-AAA protease supercomplex composed of MGR1, MGR3 and YME1. Interacts directly with MGR1. The cofactor is Zn(2+).

The protein localises to the mitochondrion inner membrane. Catalytic subunit of the mitochondrial inner membrane i-AAA protease supercomplex required for mitochondrial inner membrane protein turnover. The protease is probably ATP-dependent. Important to maintain the integrity of the mitochondrial compartment. Required both for the degradation of unassembled subunit 2 of cytochrome c oxidase (COX2) and for efficient assembly of mitochondrial respiratory chain. Binds unfolded substrates in an ATPase-independent manner; binding of folded COX2, a physiological substrate, requires an active ATPase but when COX2 is destabilized an active ATPase is no longer necessary. May process ATG32. The sequence is that of Mitochondrial inner membrane i-AAA protease supercomplex subunit YME1 (YME1) from Saccharomyces cerevisiae (strain ATCC 204508 / S288c) (Baker's yeast).